A 90-amino-acid chain; its full sequence is UPF0297 protein LVIS_1222 (90 aa).

It belongs to the UPF0297 family.

This chain is UPF0297 protein LVIS_1222, found in Levilactobacillus brevis (strain ATCC 367 / BCRC 12310 / CIP 105137 / JCM 1170 / LMG 11437 / NCIMB 947 / NCTC 947) (Lactobacillus brevis).